We begin with the raw amino-acid sequence, 746 residues long: Centromere protein I (746 aa).

The disordered stretch occupies residues 1–24; sequence MATQRVTRNSQQQNRISQGSNSRQ.

It belongs to the CENP-I/CTF3 family. In terms of assembly, component of the CENPA-CAD complex, composed of CENPI, CENPK, CENPL, CENPO, CENPP, CENPQ, CENPR and CENPS. The CENPA-CAD complex interacts with the CENPA-NAC complex, at least composed of CENPA, CENPC, CENPH, CENPM, CENPN, CENPT and CENPU. Interacts with SENP6. Sumoylated. Sumoylated form can be polyubiquitinated by RNF4, leading to its degradation. Desumoylation by SENP6 prevents its degradation.

It is found in the nucleus. The protein resides in the chromosome. Its subcellular location is the centromere. Its function is as follows. Component of the CENPA-CAD (nucleosome distal) complex, a complex recruited to centromeres which is involved in assembly of kinetochore proteins, mitotic progression and chromosome segregation. May be involved in incorporation of newly synthesized CENPA into centromeres via its interaction with the CENPA-NAC complex. Required for the localization of CENPF, MAD1L1 and MAD2 (MAD2L1 or MAD2L2) to kinetochores. Involved in the response of gonadal tissues to follicle-stimulating hormone. The chain is Centromere protein I (Cenpi) from Mus musculus (Mouse).